Consider the following 159-residue polypeptide: Small ribosomal subunit protein uS5c (159 aa).

The S5 DRBM domain maps to 17 to 80 (WEERVVSVQR…TDGKKNVITV (64 aa)).

The protein belongs to the universal ribosomal protein uS5 family. Part of the 30S ribosomal subunit. Contacts protein S4.

It is found in the plastid. Its subcellular location is the chloroplast. Its function is as follows. With S4 and S12 plays an important role in translational accuracy. This Emiliania huxleyi (Coccolithophore) protein is Small ribosomal subunit protein uS5c (rps5).